We begin with the raw amino-acid sequence, 35 residues long: Dermonecrotic toxin LgSicTox-beta-LOXN4 (35 aa).

D20 lines the Mg(2+) pocket.

This sequence belongs to the arthropod phospholipase D family. Class II subfamily. The cofactor is Mg(2+). In terms of processing, contains 2 disulfide bonds. Expressed by the venom gland.

The protein resides in the secreted. The catalysed reaction is an N-(acyl)-sphingosylphosphocholine = an N-(acyl)-sphingosyl-1,3-cyclic phosphate + choline. It carries out the reaction an N-(acyl)-sphingosylphosphoethanolamine = an N-(acyl)-sphingosyl-1,3-cyclic phosphate + ethanolamine. It catalyses the reaction a 1-acyl-sn-glycero-3-phosphocholine = a 1-acyl-sn-glycero-2,3-cyclic phosphate + choline. The enzyme catalyses a 1-acyl-sn-glycero-3-phosphoethanolamine = a 1-acyl-sn-glycero-2,3-cyclic phosphate + ethanolamine. Functionally, dermonecrotic toxins cleave the phosphodiester linkage between the phosphate and headgroup of certain phospholipids (sphingolipid and lysolipid substrates), forming an alcohol (often choline) and a cyclic phosphate. This toxin acts on sphingomyelin (SM). It may also act on ceramide phosphoethanolamine (CPE), lysophosphatidylcholine (LPC) and lysophosphatidylethanolamine (LPE), but not on lysophosphatidylserine (LPS), and lysophosphatidylglycerol (LPG). It acts by transphosphatidylation, releasing exclusively cyclic phosphate products as second products. Induces dermonecrosis, hemolysis, increased vascular permeability, edema, inflammatory response, and platelet aggregation. The sequence is that of Dermonecrotic toxin LgSicTox-beta-LOXN4 from Loxosceles gaucho (Spider).